The sequence spans 311 residues: Iron-binding protein YfeA (311 aa).

The first 31 residues, 1–31, serve as a signal peptide directing secretion; the sequence is MIERLNSPFLRAAALFTIVAFSSLISTAALA. The Fe(2+) site is built by histidine 76, histidine 141, glutamate 207, and aspartate 282.

Belongs to the bacterial solute-binding protein 9 family. In terms of assembly, monomer.

The protein localises to the periplasm. In terms of biological role, part of the ATP-binding cassette (ABC) transport system YfeABC involved in iron import. Binds iron with high affinity and specificity and delivers it to the membrane permease for translocation into the cytoplasm. Also binds Mn(2+) and Zn(2+). This is Iron-binding protein YfeA (yfeA) from Yersinia pestis.